The sequence spans 475 residues: ATP synthase subunit beta, chloroplastic (475 aa).

156 to 163 provides a ligand contact to ATP; the sequence is GGAGVGKT.

Belongs to the ATPase alpha/beta chains family. In terms of assembly, F-type ATPases have 2 components, CF(1) - the catalytic core - and CF(0) - the membrane proton channel. CF(1) has five subunits: alpha(3), beta(3), gamma(1), delta(1), epsilon(1). CF(0) has four main subunits: a(1), b(1), b'(1) and c(9-12).

It is found in the plastid. Its subcellular location is the chloroplast thylakoid membrane. The catalysed reaction is ATP + H2O + 4 H(+)(in) = ADP + phosphate + 5 H(+)(out). Functionally, produces ATP from ADP in the presence of a proton gradient across the membrane. The catalytic sites are hosted primarily by the beta subunits. This Phaeodactylum tricornutum (strain CCAP 1055/1) protein is ATP synthase subunit beta, chloroplastic.